Reading from the N-terminus, the 468-residue chain is ATP synthase subunit beta (468 aa).

155-162 (GGAGVGKT) provides a ligand contact to ATP.

This sequence belongs to the ATPase alpha/beta chains family. F-type ATPases have 2 components, CF(1) - the catalytic core - and CF(0) - the membrane proton channel. CF(1) has five subunits: alpha(3), beta(3), gamma(1), delta(1), epsilon(1). CF(0) has three main subunits: a(1), b(2) and c(9-12). The alpha and beta chains form an alternating ring which encloses part of the gamma chain. CF(1) is attached to CF(0) by a central stalk formed by the gamma and epsilon chains, while a peripheral stalk is formed by the delta and b chains.

The protein resides in the cell membrane. The enzyme catalyses ATP + H2O + 4 H(+)(in) = ADP + phosphate + 5 H(+)(out). Its function is as follows. Produces ATP from ADP in the presence of a proton gradient across the membrane. The catalytic sites are hosted primarily by the beta subunits. This chain is ATP synthase subunit beta, found in Streptococcus sanguinis (strain SK36).